A 454-amino-acid polypeptide reads, in one-letter code: Bifunctional protein GlmU (454 aa).

The segment at 1–226 (MALNVVILAA…AIEVEGANNR (226 aa)) is pyrophosphorylase. UDP-N-acetyl-alpha-D-glucosamine-binding positions include 8–11 (LAAG), lysine 22, glutamine 73, 78–79 (GT), 100–102 (YGD), glycine 137, glutamate 151, asparagine 166, and asparagine 224. Position 102 (aspartate 102) interacts with Mg(2+). Asparagine 224 contributes to the Mg(2+) binding site. Residues 227-247 (VQLAQLERAYQARAAEKLMLE) form a linker region. The tract at residues 248 to 454 (GANLRDPARI…GWTRPVKQKK (207 aa)) is N-acetyltransferase. 2 residues coordinate UDP-N-acetyl-alpha-D-glucosamine: arginine 330 and lysine 348. Histidine 360 acts as the Proton acceptor in catalysis. UDP-N-acetyl-alpha-D-glucosamine-binding residues include tyrosine 363 and asparagine 374. Acetyl-CoA-binding positions include alanine 377, 383-384 (NY), serine 402, alanine 420, and arginine 437.

The protein in the N-terminal section; belongs to the N-acetylglucosamine-1-phosphate uridyltransferase family. This sequence in the C-terminal section; belongs to the transferase hexapeptide repeat family. Homotrimer. Requires Mg(2+) as cofactor.

It is found in the cytoplasm. The enzyme catalyses alpha-D-glucosamine 1-phosphate + acetyl-CoA = N-acetyl-alpha-D-glucosamine 1-phosphate + CoA + H(+). It carries out the reaction N-acetyl-alpha-D-glucosamine 1-phosphate + UTP + H(+) = UDP-N-acetyl-alpha-D-glucosamine + diphosphate. Its pathway is nucleotide-sugar biosynthesis; UDP-N-acetyl-alpha-D-glucosamine biosynthesis; N-acetyl-alpha-D-glucosamine 1-phosphate from alpha-D-glucosamine 6-phosphate (route II): step 2/2. It functions in the pathway nucleotide-sugar biosynthesis; UDP-N-acetyl-alpha-D-glucosamine biosynthesis; UDP-N-acetyl-alpha-D-glucosamine from N-acetyl-alpha-D-glucosamine 1-phosphate: step 1/1. It participates in bacterial outer membrane biogenesis; LPS lipid A biosynthesis. Catalyzes the last two sequential reactions in the de novo biosynthetic pathway for UDP-N-acetylglucosamine (UDP-GlcNAc). The C-terminal domain catalyzes the transfer of acetyl group from acetyl coenzyme A to glucosamine-1-phosphate (GlcN-1-P) to produce N-acetylglucosamine-1-phosphate (GlcNAc-1-P), which is converted into UDP-GlcNAc by the transfer of uridine 5-monophosphate (from uridine 5-triphosphate), a reaction catalyzed by the N-terminal domain. The polypeptide is Bifunctional protein GlmU (Shewanella loihica (strain ATCC BAA-1088 / PV-4)).